Reading from the N-terminus, the 137-residue chain is MLKEFKEFALKGNMIDLAIGVIIGGAFGGLVNSIVNDILMPIIGFITGGIDFSNMFIQLAGEKQATLSAAKTAGATISYGNFITLLINFLIIAWVLFLFVKGMNKIRRKQEKEESSKKMSLEEQLLSEIRDLLAKKK.

Helical transmembrane passes span 15–35, 38–58, and 80–100; these read IDLA…NSIV, ILMP…MFIQ, and GNFI…FLFV.

It belongs to the MscL family. In terms of assembly, homopentamer.

It is found in the cell inner membrane. Functionally, channel that opens in response to stretch forces in the membrane lipid bilayer. May participate in the regulation of osmotic pressure changes within the cell. The polypeptide is Large-conductance mechanosensitive channel (Bartonella quintana (strain Toulouse) (Rochalimaea quintana)).